The chain runs to 249 residues: Triosephosphate isomerase (249 aa).

Position 9 to 11 (9 to 11 (NWK)) interacts with substrate. Catalysis depends on histidine 95, which acts as the Electrophile. Residue glutamate 166 is the Proton acceptor of the active site. Substrate is bound by residues glycine 172, serine 211, and 232-233 (GG).

This sequence belongs to the triosephosphate isomerase family. As to quaternary structure, homodimer.

Its subcellular location is the cytoplasm. The catalysed reaction is D-glyceraldehyde 3-phosphate = dihydroxyacetone phosphate. The protein operates within carbohydrate biosynthesis; gluconeogenesis. It functions in the pathway carbohydrate degradation; glycolysis; D-glyceraldehyde 3-phosphate from glycerone phosphate: step 1/1. In terms of biological role, involved in the gluconeogenesis. Catalyzes stereospecifically the conversion of dihydroxyacetone phosphate (DHAP) to D-glyceraldehyde-3-phosphate (G3P). In Legionella pneumophila (strain Paris), this protein is Triosephosphate isomerase.